We begin with the raw amino-acid sequence, 156 residues long: tRNA-specific adenosine deaminase (156 aa).

The CMP/dCMP-type deaminase domain occupies 2 to 120; the sequence is TNDIYFMTLA…GSLMNLLQQS (119 aa). Histidine 53 serves as a coordination point for Zn(2+). Glutamate 55 functions as the Proton donor in the catalytic mechanism. Zn(2+) contacts are provided by cysteine 83 and cysteine 86.

The protein belongs to the cytidine and deoxycytidylate deaminase family. In terms of assembly, homodimer. Zn(2+) is required as a cofactor.

The enzyme catalyses adenosine(34) in tRNA + H2O + H(+) = inosine(34) in tRNA + NH4(+). Functionally, catalyzes the deamination of adenosine to inosine at the wobble position 34 of tRNA(Arg2). The polypeptide is tRNA-specific adenosine deaminase (Staphylococcus aureus (strain Mu50 / ATCC 700699)).